We begin with the raw amino-acid sequence, 384 residues long: N-acetyldiaminopimelate deacetylase (384 aa).

Residue Asp73 is part of the active site. Residue Glu132 is the Proton acceptor of the active site.

This sequence belongs to the peptidase M20A family. N-acetyldiaminopimelate deacetylase subfamily.

The enzyme catalyses N-acetyl-(2S,6S)-2,6-diaminopimelate + H2O = (2S,6S)-2,6-diaminopimelate + acetate. The protein operates within amino-acid biosynthesis; L-lysine biosynthesis via DAP pathway; LL-2,6-diaminopimelate from (S)-tetrahydrodipicolinate (acetylase route): step 3/3. Catalyzes the conversion of N-acetyl-diaminopimelate to diaminopimelate and acetate. This Limosilactobacillus fermentum (strain NBRC 3956 / LMG 18251) (Lactobacillus fermentum) protein is N-acetyldiaminopimelate deacetylase.